We begin with the raw amino-acid sequence, 302 residues long: Porphobilinogen deaminase (302 aa).

S-(dipyrrolylmethanemethyl)cysteine is present on cysteine 234.

Belongs to the HMBS family. Monomer. The cofactor is dipyrromethane.

It catalyses the reaction 4 porphobilinogen + H2O = hydroxymethylbilane + 4 NH4(+). The protein operates within porphyrin-containing compound metabolism; protoporphyrin-IX biosynthesis; coproporphyrinogen-III from 5-aminolevulinate: step 2/4. Its function is as follows. Tetrapolymerization of the monopyrrole PBG into the hydroxymethylbilane pre-uroporphyrinogen in several discrete steps. This Corynebacterium glutamicum (strain R) protein is Porphobilinogen deaminase.